The primary structure comprises 57 residues: Large ribosomal subunit protein bL32 (57 aa).

It belongs to the bacterial ribosomal protein bL32 family.

This Corynebacterium glutamicum (strain R) protein is Large ribosomal subunit protein bL32.